The sequence spans 1029 residues: Huntingtin-interacting protein 1 (1029 aa).

One can recognise an ENTH domain in the interval 32-160; the sequence is ERESFERTQT…EYHTKNPRFP (129 aa). The residue at position 338 (Ser-338) is a Phosphoserine. Positions 375–636 form a coiled coil; sequence HLIERLYREI…IQEALSQLEE (262 aa). The tract at residues 410–491 is pDED; it reads SELEAELAEQ…HADLLRKNAE (82 aa). Positions 763–1004 constitute an I/LWEQ domain; sequence GLDIKQEELG…ELRKKHYELA (242 aa). The interval 859–916 is important for actin binding; the sequence is RWTEGLISASKAVGWGATIMVDAADLVVQGKGKFEELMVCSREIAASTAQLVAASKVK. The disordered stretch occupies residues 1009–1029; it reads GWEEGTEASPSTVQEAIPDKE.

It belongs to the SLA2 family. In terms of assembly, homodimer. Binds actin. Binds HTT (via N-terminus). This interaction is restricted to the brain. Binds to IFT57. In normal conditions, it poorly interacts with IFT57, HIP1 being strongly associated with HTT. However, in mutant HTT proteins with a long poly-Gln region, interaction between HTT and HIP1 is inhibited, promoting the interaction between HIP1 and IFT57. Interacts with CLTB (via N-terminus). Interacts (via coiled coil domain) with AR. Interacts with AP2A1, AP2A2, CLTC and HIP1R. Interacts with GRIA1, GRIN2A and GRIN2B. Most abundantly expressed in brain. In brain, expressed in cortical tissue, hippocampus, the molecular layer of the cerebellum and olfactory bulb. Also expressed in spinal cord and bone marrow (at protein level). Expressed in reproductive tissues.

It is found in the cytoplasm. It localises to the nucleus. The protein localises to the endomembrane system. Its subcellular location is the cytoplasmic vesicle. The protein resides in the clathrin-coated vesicle membrane. Its function is as follows. Plays a role in clathrin-mediated endocytosis and trafficking. Involved in regulating AMPA receptor trafficking in the central nervous system in an NMDA-dependent manner. Regulates presynaptic nerve terminal activity. Enhances androgen receptor (AR)-mediated transcription. May act as a proapoptotic protein that induces cell death by acting through the intrinsic apoptosis pathway. Binds 3-phosphoinositides (via ENTH domain). May act through the ENTH domain to promote cell survival by stabilizing receptor tyrosine kinases following ligand-induced endocytosis. May play a functional role in the cell filament networks. May be required for differentiation, proliferation, and/or survival of somatic and germline progenitors. This Mus musculus (Mouse) protein is Huntingtin-interacting protein 1.